The chain runs to 160 residues: Transcriptional repressor NrdR (160 aa).

A compositionally biased stretch (polar residues) spans Met1 to Thr11. The segment at Met1 to Glu20 is disordered. A zinc finger lies at Cys3 to Cys34. The ATP-cone domain maps to Leu49 to Asp139.

The protein belongs to the NrdR family. Requires Zn(2+) as cofactor.

Its function is as follows. Negatively regulates transcription of bacterial ribonucleotide reductase nrd genes and operons by binding to NrdR-boxes. The protein is Transcriptional repressor NrdR of Rhodopseudomonas palustris (strain ATCC BAA-98 / CGA009).